Reading from the N-terminus, the 355-residue chain is UDP-N-acetylglucosamine--N-acetylmuramyl-(pentapeptide) pyrophosphoryl-undecaprenol N-acetylglucosamine transferase (355 aa).

Residues 13–15 (TGG), Asn-125, Arg-162, Ser-190, Ile-244, and Gln-289 each bind UDP-N-acetyl-alpha-D-glucosamine.

This sequence belongs to the glycosyltransferase 28 family. MurG subfamily.

It localises to the cell inner membrane. It carries out the reaction di-trans,octa-cis-undecaprenyl diphospho-N-acetyl-alpha-D-muramoyl-L-alanyl-D-glutamyl-meso-2,6-diaminopimeloyl-D-alanyl-D-alanine + UDP-N-acetyl-alpha-D-glucosamine = di-trans,octa-cis-undecaprenyl diphospho-[N-acetyl-alpha-D-glucosaminyl-(1-&gt;4)]-N-acetyl-alpha-D-muramoyl-L-alanyl-D-glutamyl-meso-2,6-diaminopimeloyl-D-alanyl-D-alanine + UDP + H(+). Its pathway is cell wall biogenesis; peptidoglycan biosynthesis. Cell wall formation. Catalyzes the transfer of a GlcNAc subunit on undecaprenyl-pyrophosphoryl-MurNAc-pentapeptide (lipid intermediate I) to form undecaprenyl-pyrophosphoryl-MurNAc-(pentapeptide)GlcNAc (lipid intermediate II). This is UDP-N-acetylglucosamine--N-acetylmuramyl-(pentapeptide) pyrophosphoryl-undecaprenol N-acetylglucosamine transferase from Neisseria meningitidis serogroup A / serotype 4A (strain DSM 15465 / Z2491).